The following is a 46-amino-acid chain: Crambin (46 aa).

3 disulfide bridges follow: Cys-3-Cys-40, Cys-4-Cys-32, and Cys-16-Cys-26.

Belongs to the plant thionin (TC 1.C.44) family.

Its subcellular location is the secreted. Its function is as follows. The function of this hydrophobic plant seed protein is not known. This chain is Crambin (THI2), found in Crambe hispanica subsp. abyssinica (Abyssinian kale).